A 175-amino-acid chain; its full sequence is Peptide deformylase (175 aa).

Cysteine 99 and histidine 141 together coordinate Fe cation. Glutamate 142 is a catalytic residue. A Fe cation-binding site is contributed by histidine 145.

Belongs to the polypeptide deformylase family. Requires Fe(2+) as cofactor.

It catalyses the reaction N-terminal N-formyl-L-methionyl-[peptide] + H2O = N-terminal L-methionyl-[peptide] + formate. Functionally, removes the formyl group from the N-terminal Met of newly synthesized proteins. Requires at least a dipeptide for an efficient rate of reaction. N-terminal L-methionine is a prerequisite for activity but the enzyme has broad specificity at other positions. The chain is Peptide deformylase from Rickettsia typhi (strain ATCC VR-144 / Wilmington).